The following is a 208-amino-acid chain: FMN-dependent NADH:quinone oxidoreductase (208 aa).

FMN contacts are provided by residues His10, 17-19, 104-107, 148-153, and Asp184; these read SRS, MWNL, and SNGGFY.

The protein belongs to the azoreductase type 1 family. Homodimer. FMN is required as a cofactor.

It catalyses the reaction 2 a quinone + NADH + H(+) = 2 a 1,4-benzosemiquinone + NAD(+). The catalysed reaction is N,N-dimethyl-1,4-phenylenediamine + anthranilate + 2 NAD(+) = 2-(4-dimethylaminophenyl)diazenylbenzoate + 2 NADH + 2 H(+). Functionally, quinone reductase that provides resistance to thiol-specific stress caused by electrophilic quinones. Its function is as follows. Also exhibits azoreductase activity. Catalyzes the reductive cleavage of the azo bond in aromatic azo compounds to the corresponding amines. Requires NADH, but not NADPH, as an electron donor for its activity. The enzyme can also reduce a wide range of sulfonated azo dyes. The substrate preference order is methyl Red &gt; Orange II &gt; Ponceau BS &gt; Ponceau S &gt; Orange G &gt; Amaranth. This Enterococcus faecalis (strain ATCC 700802 / V583) protein is FMN-dependent NADH:quinone oxidoreductase.